A 283-amino-acid polypeptide reads, in one-letter code: Large ribosomal subunit protein uL2 (283 aa).

2 disordered regions span residues 34–53 (TEPY…TARH) and 224–283 (AMNP…KKKK). Residues 232 to 245 (NGGGQGKSKGGGGW) are compositionally biased toward gly residues. The span at 256–268 (AKGKKTRHKRKNS) shows a compositional bias: basic residues.

The protein belongs to the universal ribosomal protein uL2 family. As to quaternary structure, part of the 50S ribosomal subunit. Forms a bridge to the 30S subunit in the 70S ribosome.

Its function is as follows. One of the primary rRNA binding proteins. Required for association of the 30S and 50S subunits to form the 70S ribosome, for tRNA binding and peptide bond formation. It has been suggested to have peptidyltransferase activity; this is somewhat controversial. Makes several contacts with the 16S rRNA in the 70S ribosome. The sequence is that of Large ribosomal subunit protein uL2 from Methylacidiphilum infernorum (isolate V4) (Methylokorus infernorum (strain V4)).